We begin with the raw amino-acid sequence, 307 residues long: Shikimate kinase 2, chloroplastic (307 aa).

Residues 1 to 60 (MEARAGLAMQSRAAVGVGAGPGVGRRGRAVIRVGKRPTAASLRVGGPAGPAAAKPLAPLY) constitute a chloroplast transit peptide. 101–108 (GMMGSGKS) provides a ligand contact to ATP. A Mg(2+)-binding site is contributed by Ser-108. The substrate site is built by Asp-126, Arg-151, and Gly-173. Arg-212 serves as a coordination point for ATP. The segment at 285-307 (HSTSSGPVGDLIVDSQNRRTKAL) is disordered.

It belongs to the shikimate kinase family. Mg(2+) serves as cofactor. As to expression, expressed in panicles.

The protein resides in the plastid. It localises to the chloroplast. It carries out the reaction shikimate + ATP = 3-phosphoshikimate + ADP + H(+). It participates in metabolic intermediate biosynthesis; chorismate biosynthesis; chorismate from D-erythrose 4-phosphate and phosphoenolpyruvate: step 5/7. In terms of biological role, catalyzes the specific phosphorylation of the 3-hydroxyl group of shikimic acid using ATP as a cosubstrate. This is Shikimate kinase 2, chloroplastic (SK2) from Oryza sativa subsp. japonica (Rice).